A 262-amino-acid polypeptide reads, in one-letter code: UPF0758 protein BTH_I0781 (262 aa).

The interval 1–45 (MQYEIVSAGENVGDEPERERPVAQAAAAPGIPRPAALPAAGAARR) is disordered. Low complexity predominate over residues 22–43 (VAQAAAAPGIPRPAALPAAGAA). The 123-residue stretch at 140-262 (LVDSPGAVDD…TFSFAQAGWI (123 aa)) folds into the MPN domain. Residues histidine 211, histidine 213, and aspartate 224 each contribute to the Zn(2+) site. The JAMM motif signature appears at 211-224 (HNHPSGAVRPSAAD).

The protein belongs to the UPF0758 family.

The sequence is that of UPF0758 protein BTH_I0781 from Burkholderia thailandensis (strain ATCC 700388 / DSM 13276 / CCUG 48851 / CIP 106301 / E264).